A 256-amino-acid chain; its full sequence is Transmembrane protein 74B (256 aa).

A disordered region spans residues 1–111 (MPPAQGYEFA…LSLHSEEGPA (111 aa)). Low complexity predominate over residues 80-96 (RLGSSPSPPGGVSSLPR). Residues 97–108 (SQRDDLSLHSEE) show a composition bias toward basic and acidic residues. 2 consecutive transmembrane segments (helical) span residues 123 to 143 (FVSA…AYAI) and 177 to 197 (IIAG…LLMV).

Belongs to the TMEM74 family.

The protein resides in the membrane. This is Transmembrane protein 74B (TMEM74B) from Homo sapiens (Human).